A 93-amino-acid chain; its full sequence is Putative transmembrane protein ORF25 (93 aa).

3 helical membrane-spanning segments follow: residues 1–21, 22–42, and 60–80; these read MAGIHVVLGLFEGALFTNVNA, FLVLMIILSGLIGLFSGYASI, and LWIFNSMLYIIMTIVFVVMSL.

It is found in the host membrane. This is Putative transmembrane protein ORF25 from His1 virus (isolate Australia/Victoria) (His1V).